Reading from the N-terminus, the 148-residue chain is Arginine repressor (148 aa).

It belongs to the ArgR family.

Its subcellular location is the cytoplasm. The protein operates within amino-acid biosynthesis; L-arginine biosynthesis [regulation]. Functionally, regulates arginine biosynthesis genes. This Streptococcus pneumoniae serotype 4 (strain ATCC BAA-334 / TIGR4) protein is Arginine repressor (argR).